The following is a 485-amino-acid chain: Silicon efflux transporter LSI3 (485 aa).

A run of 5 helical transmembrane segments spans residues 14 to 34 (VAFG…LPIG), 37 to 57 (AGAL…ADDA), 59 to 79 (ASID…GGYL), 106 to 126 (VCVV…CVVL), and 180 to 200 (FLLG…LMLL). Positions 233-242 (ALNNNKKDDG) are enriched in basic and acidic residues. Positions 233-261 (ALNNNKKDDGDAATPASPEDDDGGDAESM) are disordered. 5 consecutive transmembrane segments (helical) span residues 283–303 (LFLK…YMLG), 336–356 (LLVF…TGLP), 377–397 (VLSV…TVLL), 418–438 (WLLL…GSAA), and 461–481 (HVIF…PLIG).

It belongs to the arsenite-antimonite (ArsB) efflux (TC 2.A.45) family.

Its subcellular location is the cell membrane. In terms of biological role, silicon efflux transporter involved in silicon transport in shoots. In the nodes, involved with LSI2 and NIP2-2/LSI6 in silicon intervascular transfer, which is required for the preferential distribution of silicon, such as hyperaccumulation of silicon in the husk. Silicon is beneficial to plant growth and helps plants to overcome abiotic and biotic stresses by preventing lodging (falling over) and increasing resistance to pests and diseases, as well as other stresses. This is Silicon efflux transporter LSI3 from Oryza sativa subsp. japonica (Rice).